The chain runs to 512 residues: MGNSANEDKLRYACDRCHSQKLRCPRSVEPEKANPEEPCSRCRKAGVPCVVSLRGKVGRPSKATKKKSARSPRATSTPEAEFPPYDINSVLSGEVDGSIPWASPSGDRMMDMFDLASGSGSVTTSASPKTMAEDYQPEGQRPFPDPLMGPGLIQVPYEPFLMEFDTDADYPTFCIPPSLTDMPAGVEFNQPQDKTFNSSQMDSFMDVKTDASMMMPHADMDMTSPKGTGPTIDPVTVDPRMSFSAHAAQSPGDIFASDDFEAGAEFSSTASYQKLSDLNLRILQCGSTAQAGTAPQNSSQLLKDVVGFSGELIDIARQSMPHFVGCTRSSSRASTTSKGSSMESDEGDGSIDTAFSQSSWGSLKPGSASGPQATSQSVPESAVIFLLLGCYTQILHLFELTTNCLWAQHCEAGQPAPQNDDTSGTIGSLLEASIAIHTVTYLLSRLHRALAAPEMDASTDAADSHGWKKSFVGGKELEDGLLGRAFGEIREREQWLMRRTKHLQQRINKCHI.

Residues 14–49 (CDRCHSQKLRCPRSVEPEKANPEEPCSRCRKAGVPC) constitute a DNA-binding region (zn(2)-C6 fungal-type). Disordered regions lie at residues 54 to 87 (RGKV…PYDI), 118 to 148 (GSGS…DPLM), and 325 to 351 (GCTR…DGSI). The span at 56–70 (KVGRPSKATKKKSAR) shows a compositional bias: basic residues. 2 stretches are compositionally biased toward low complexity: residues 118 to 127 (GSGSVTTSAS) and 327 to 342 (TRSS…GSSM).

It is found in the nucleus. Transcription factor that regulates the expression of the asc-1 and asc-2 gene clusters that mediate the biosynthesis of both ascochlorin and ascofuranone, a strong inhibitor of cyanide-insensitive alternative oxidases and a promising drug candidate against African trypanosomiasis. Binds the 5'-CGGYGNNTTW-3' motif within promoters of the target genes. The polypeptide is Ascofuranone/ascochlorin biosynthesis clusters transcription regulator (Acremonium egyptiacum (Oospora egyptiaca)).